A 413-amino-acid polypeptide reads, in one-letter code: Alpha-1-antitrypsin 1-4 (413 aa).

The first 24 residues, 1-24, serve as a signal peptide directing secretion; that stretch reads MTPSISWSLLLLAGLCCLVPSFLA. Residues asparagine 64, asparagine 101, and asparagine 265 are each glycosylated (N-linked (GlcNAc...) asparagine). The tract at residues 368-387 is RCL; that stretch reads AATVLQVATYSMPPIVRFDH.

Belongs to the serpin family.

The protein resides in the secreted. Inhibitor of serine proteases. Can inhibit trypsin and chymotrypsin; relatively ineffective against elastase. In Mus musculus (Mouse), this protein is Alpha-1-antitrypsin 1-4 (Serpina1d).